A 289-amino-acid polypeptide reads, in one-letter code: Acetylglutamate kinase (289 aa).

Residues 60 to 61 (GG), Arg82, and Asn182 each bind substrate.

Belongs to the acetylglutamate kinase family. ArgB subfamily.

Its subcellular location is the cytoplasm. It catalyses the reaction N-acetyl-L-glutamate + ATP = N-acetyl-L-glutamyl 5-phosphate + ADP. It functions in the pathway amino-acid biosynthesis; L-arginine biosynthesis; N(2)-acetyl-L-ornithine from L-glutamate: step 2/4. In terms of biological role, catalyzes the ATP-dependent phosphorylation of N-acetyl-L-glutamate. The protein is Acetylglutamate kinase of Methanothrix thermoacetophila (strain DSM 6194 / JCM 14653 / NBRC 101360 / PT) (Methanosaeta thermophila).